The chain runs to 58 residues: UPF0391 membrane protein Plav_0056 (58 aa).

The next 2 helical transmembrane spans lie at 4-24 and 30-50; these read WAAV…GGLV and IAQI…IFGV.

Belongs to the UPF0391 family.

Its subcellular location is the cell membrane. The polypeptide is UPF0391 membrane protein Plav_0056 (Parvibaculum lavamentivorans (strain DS-1 / DSM 13023 / NCIMB 13966)).